The primary structure comprises 34 residues: Photosystem II reaction center protein M (34 aa).

A helical transmembrane segment spans residues 5–25 (ILGLIATALFIIIPTSFLLIL).

This sequence belongs to the PsbM family. In terms of assembly, PSII is composed of 1 copy each of membrane proteins PsbA, PsbB, PsbC, PsbD, PsbE, PsbF, PsbH, PsbI, PsbJ, PsbK, PsbL, PsbM, PsbT, PsbX, PsbY, PsbZ, Psb30/Ycf12, at least 3 peripheral proteins of the oxygen-evolving complex and a large number of cofactors. It forms dimeric complexes.

Its subcellular location is the plastid. It is found in the chloroplast thylakoid membrane. One of the components of the core complex of photosystem II (PSII). PSII is a light-driven water:plastoquinone oxidoreductase that uses light energy to abstract electrons from H(2)O, generating O(2) and a proton gradient subsequently used for ATP formation. It consists of a core antenna complex that captures photons, and an electron transfer chain that converts photonic excitation into a charge separation. This subunit is found at the monomer-monomer interface. The polypeptide is Photosystem II reaction center protein M (Nephroselmis olivacea (Green alga)).